The sequence spans 95 residues: Small ribosomal subunit protein bS6 (95 aa).

It belongs to the bacterial ribosomal protein bS6 family.

In terms of biological role, binds together with bS18 to 16S ribosomal RNA. This Bacillus cytotoxicus (strain DSM 22905 / CIP 110041 / 391-98 / NVH 391-98) protein is Small ribosomal subunit protein bS6.